A 190-amino-acid polypeptide reads, in one-letter code: ATP synthase subunit delta (190 aa).

It belongs to the ATPase delta chain family. In terms of assembly, F-type ATPases have 2 components, F(1) - the catalytic core - and F(0) - the membrane proton channel. F(1) has five subunits: alpha(3), beta(3), gamma(1), delta(1), epsilon(1). F(0) has three main subunits: a(1), b(2) and c(10-14). The alpha and beta chains form an alternating ring which encloses part of the gamma chain. F(1) is attached to F(0) by a central stalk formed by the gamma and epsilon chains, while a peripheral stalk is formed by the delta and b chains.

Its subcellular location is the cell inner membrane. In terms of biological role, f(1)F(0) ATP synthase produces ATP from ADP in the presence of a proton or sodium gradient. F-type ATPases consist of two structural domains, F(1) containing the extramembraneous catalytic core and F(0) containing the membrane proton channel, linked together by a central stalk and a peripheral stalk. During catalysis, ATP synthesis in the catalytic domain of F(1) is coupled via a rotary mechanism of the central stalk subunits to proton translocation. Functionally, this protein is part of the stalk that links CF(0) to CF(1). It either transmits conformational changes from CF(0) to CF(1) or is implicated in proton conduction. The chain is ATP synthase subunit delta from Salinibacter ruber (strain DSM 13855 / M31).